The sequence spans 598 residues: Chaperone protein DnaK (598 aa).

The residue at position 175 (Thr175) is a Phosphothreonine; by autocatalysis. Residues 571–591 (AKSAAASSNKDDSLNNNSSSN) are compositionally biased toward low complexity. The segment at 571 to 598 (AKSAAASSNKDDSLNNNSSSNNDEETFE) is disordered.

The protein belongs to the heat shock protein 70 family.

Its function is as follows. Acts as a chaperone. The polypeptide is Chaperone protein DnaK (Mycoplasmopsis agalactiae (strain NCTC 10123 / CIP 59.7 / PG2) (Mycoplasma agalactiae)).